A 207-amino-acid polypeptide reads, in one-letter code: Varv peptide A/Kalata-B1 (207 aa).

The signal sequence occupies residues 1–20; the sequence is MKMFIVLVLSAAFALPAAFA. Residues 21-66 constitute a propeptide that is removed on maturation; the sequence is TEQDVITLQAYEELLKNGAANGMTKTVISSPVLEEALVSYSKNKLG. Positions 67–95 form a cross-link, cyclopeptide (Gly-Asn); that stretch reads GLPVCGETCVGGTCNTPGCSCSWPVCTRN. Disulfide bonds link cysteine 71-cysteine 85, cysteine 75-cysteine 87, and cysteine 80-cysteine 92. A propeptide spanning residues 96–120 is cleaved from the precursor; sequence SLESTKSANPLLEEALTAFAKKGLG. The cyclopeptide (Gly-Asn) cross-link spans 121-149; it reads GLPVCGETCVGGTCNTPGCTCSWPVCTRN. Disulfide bonds link cysteine 125-cysteine 139, cysteine 129-cysteine 141, and cysteine 134-cysteine 146. The propeptide occupies 150–174; that stretch reads ALETQKPNHLLEEALVAFAKKGNLG. A cross-link (cyclopeptide (Gly-Asn)) is located at residues 175-203; sequence GLPVCGETCVGGTCNTPGCSCSWPVCTRN. 3 cysteine pairs are disulfide-bonded: cysteine 179–cysteine 193, cysteine 183–cysteine 195, and cysteine 188–cysteine 200. A propeptide spanning residues 204 to 207 is cleaved from the precursor; sequence ALAM.

The protein belongs to the cyclotide family. Moebius subfamily. Post-translationally, varv peptide A and kalata-B1 are cyclic peptides.

Probably participates in a plant defense mechanism. Has hemolytic activity. This is Varv peptide A/Kalata-B1 from Viola odorata (Sweet violet).